The following is a 410-amino-acid chain: Arginine deiminase (410 aa).

The active-site Amidino-cysteine intermediate is the C400.

This sequence belongs to the arginine deiminase family.

The protein localises to the cytoplasm. It catalyses the reaction L-arginine + H2O = L-citrulline + NH4(+). The protein operates within amino-acid degradation; L-arginine degradation via ADI pathway; carbamoyl phosphate from L-arginine: step 1/2. This chain is Arginine deiminase (arcA), found in Borreliella burgdorferi (strain ATCC 35210 / DSM 4680 / CIP 102532 / B31) (Borrelia burgdorferi).